A 133-amino-acid chain; its full sequence is Small ribosomal subunit protein eS8 (133 aa).

The tract at residues 1–34 (MGVWHGRSLRKPTGGRIRPHRKKRKFEMGNPPTE) is disordered.

This sequence belongs to the eukaryotic ribosomal protein eS8 family. Part of the 30S ribosomal subunit.

This is Small ribosomal subunit protein eS8 from Methanopyrus kandleri (strain AV19 / DSM 6324 / JCM 9639 / NBRC 100938).